A 361-amino-acid chain; its full sequence is Phosphoserine aminotransferase (361 aa).

An L-glutamate-binding site is contributed by arginine 42. Pyridoxal 5'-phosphate-binding positions include 76-77 (AT), tryptophan 102, threonine 152, aspartate 172, and glutamine 195. The residue at position 196 (lysine 196) is an N6-(pyridoxal phosphate)lysine. 237 to 238 (NT) contacts pyridoxal 5'-phosphate.

This sequence belongs to the class-V pyridoxal-phosphate-dependent aminotransferase family. SerC subfamily. In terms of assembly, homodimer. The cofactor is pyridoxal 5'-phosphate.

It localises to the cytoplasm. It carries out the reaction O-phospho-L-serine + 2-oxoglutarate = 3-phosphooxypyruvate + L-glutamate. The enzyme catalyses 4-(phosphooxy)-L-threonine + 2-oxoglutarate = (R)-3-hydroxy-2-oxo-4-phosphooxybutanoate + L-glutamate. Its pathway is amino-acid biosynthesis; L-serine biosynthesis; L-serine from 3-phospho-D-glycerate: step 2/3. The protein operates within cofactor biosynthesis; pyridoxine 5'-phosphate biosynthesis; pyridoxine 5'-phosphate from D-erythrose 4-phosphate: step 3/5. In terms of biological role, catalyzes the reversible conversion of 3-phosphohydroxypyruvate to phosphoserine and of 3-hydroxy-2-oxo-4-phosphonooxybutanoate to phosphohydroxythreonine. The polypeptide is Phosphoserine aminotransferase (Stenotrophomonas maltophilia (strain R551-3)).